A 526-amino-acid chain; its full sequence is Biotin carboxylase 2, chloroplastic (526 aa).

The transit peptide at 1 to 71 (MEATLPVCKS…GVTCRAEKIL (71 aa)) directs the protein to the chloroplast. ATP is bound by residues Lys-181, 213-274 (ASEI…PRHI), Lys-223, 229-230 (GG), 265-268 (EKYV), and His-273. The region spanning 185–382 (RETMKKANVP…LIEEQIRVAM (198 aa)) is the ATP-grasp domain. Residue Lys-302 coordinates hydrogencarbonate. Glu-340 and Glu-353 together coordinate ATP. Mg(2+) contacts are provided by Glu-340, Glu-353, and Asn-355. Mn(2+) contacts are provided by Glu-340, Glu-353, and Asn-355. Hydrogencarbonate-binding residues include Arg-357, Val-360, and Arg-403. Arg-357 is an active-site residue. Arg-403 is a binding site for biotin.

In terms of assembly, acetyl-CoA carboxylase is a heterohexamer composed of biotin carboxyl carrier protein, biotin carboxylase and two subunits each of ACCase subunit alpha and ACCase plastid-coded subunit beta (accD). Mg(2+) serves as cofactor. Mn(2+) is required as a cofactor.

Its subcellular location is the plastid. The protein resides in the chloroplast. It catalyses the reaction N(6)-biotinyl-L-lysyl-[protein] + hydrogencarbonate + ATP = N(6)-carboxybiotinyl-L-lysyl-[protein] + ADP + phosphate + H(+). Its pathway is lipid metabolism; malonyl-CoA biosynthesis; malonyl-CoA from acetyl-CoA: step 1/1. In terms of biological role, this protein is a component of the acetyl coenzyme A carboxylase complex; first, biotin carboxylase catalyzes the carboxylation of the carrier protein and then the transcarboxylase transfers the carboxyl group to form malonyl-CoA. This Populus trichocarpa (Western balsam poplar) protein is Biotin carboxylase 2, chloroplastic.